The primary structure comprises 128 residues: Large ribosomal subunit protein bL20c (128 aa).

It belongs to the bacterial ribosomal protein bL20 family. Component of the chloroplast large ribosomal subunit (LSU). Mature 70S chloroplast ribosomes of higher plants consist of a small (30S) and a large (50S) subunit. The 30S small subunit contains 1 molecule of ribosomal RNA (16S rRNA) and 24 different proteins. The 50S large subunit contains 3 rRNA molecules (23S, 5S and 4.5S rRNA) and 33 different proteins.

The protein localises to the plastid. The protein resides in the chloroplast. In terms of biological role, component of the chloroplast ribosome (chloro-ribosome), a dedicated translation machinery responsible for the synthesis of chloroplast genome-encoded proteins, including proteins of the transcription and translation machinery and components of the photosynthetic apparatus. The chain is Large ribosomal subunit protein bL20c (rpl20) from Spinacia oleracea (Spinach).